A 303-amino-acid chain; its full sequence is DnaJ homolog subfamily C member 17 (303 aa).

The J domain maps to 11–76 (DLYALLGIEE…AARAAYDKVR (66 aa)). 2 stretches are compositionally biased toward basic and acidic residues: residues 78 to 106 (ARKQ…RERQ) and 150 to 166 (IRQD…ENTE). Disordered stretches follow at residues 78–124 (ARKQ…TTTL) and 150–170 (IRQD…GKGT). The region spanning 178–249 (KCKKEDESQG…NPLKVSWLEG (72 aa)) is the RRM domain. An N6-methyllysine modification is found at lysine 264.

It is found in the cytoplasm. It localises to the nucleus. May negatively affect PAX8-induced thyroglobulin/TG transcription. This chain is DnaJ homolog subfamily C member 17 (Dnajc17), found in Rattus norvegicus (Rat).